Here is a 908-residue protein sequence, read N- to C-terminus: MAEGFVSFGLEKLWDLLSRESERLQGIDEQLDGLKRQLRSLQSLLKDADAKKHGSDRVRNFLEDVKDLVFDAEDIIESYVLNKLRGEGKGVKKHVRRLARFLTDRHKVASDIEGITKRISDVIGEMQSFGIQQIIDGVRSLSLQERQRVQREIRQTYPDSSESDLVGVEQSVEELVGHLVENDIYQVVSIAGMGGIGKTTLARQVFHHDLVRRHFDGFAWVCVSQQFTLKHVWQRILQELQPHDGNILQMDESALQPKLFQLLETGRYLLVLDDVWKKEDWDRIKAVFPRKRGWKMLLTSRNEGVGIHADPTCLTFRASILNPEESWKLCERIVFPRRDETEVRLDEEMEAMGKEMVTHCGGLPLAVKALGGLLANKHTVPEWKRVSDNIGSQIVGGSCLDDNSLNSVNRILSLSYEDLPTHLKHRFLYLAHFPEDSKIYTQDLFNYWAAEGIYDGSTIQDSGEYYLEELVRRNLVIADNRYLSLEFNFCQMHDMMREVCLSKAKEENFLQIIKDPTSTSTINAQSPSRSRRFSIHSGKAFHILGHRNNPKVRSLIVSRFEEDFWIRSASVFHNLTLLRVLDLSRVKFEGGKLPSSIGGLIHLRYLSLYGAVVSHLPSTMRNLKLLLFLNLRVDNKEPIHVPNVLKEMLELRYLSLPQEMDDKTKLELGDLVNLEYLWYFSTQHSSVTDLLRMTKLRNLGVSLSERCNFETLSSSLRELRNLEMLNVLFSPEIVMVDHMGEFVLDHFIHLKQLGLAVRMSKIPDQHQFPPHLAHIHLVHCVMKEDPMPILEKLLHLKSVALSYGAFIGRRVVCSKGGFPQLCALGISGESELEEWIVEEGSMPCLRTLTIHDCEKLKELPDGLKYITSLKELKIREMKREWKEKLVPGGEDYYKVQHIPDVQFINCDL.

Positions 15 to 57 form a coiled coil; the sequence is DLLSRESERLQGIDEQLDGLKRQLRSLQSLLKDADAKKHGSDR. The NB-ARC domain occupies 146–459; that stretch reads RQRVQREIRQ…AEGIYDGSTI (314 aa). Residue 192 to 199 coordinates ATP; sequence GMGGIGKT. 3 LRR repeats span residues 575-599, 600-623, and 842-867; these read LTLLRVLDLSRVKFEGGKLPSSIGG, LIHLRYLSLYGAVVSHLPSTMRNL, and MPCLRTLTIHDCEKLKELPDGLKYIT.

This sequence belongs to the disease resistance NB-LRR family. RPP8/HRT subfamily.

In terms of biological role, potential disease resistance protein. The protein is Probable disease resistance RPP8-like protein 4 (RPP8L4) of Arabidopsis thaliana (Mouse-ear cress).